Here is a 446-residue protein sequence, read N- to C-terminus: Dimethylsulfoniopropionate lyase DddP (446 aa).

Residues 1-13 (MNQHYSETRKIDP) are compositionally biased toward basic and acidic residues. Positions 1-30 (MNQHYSETRKIDPSRGATLGDNTPNDNNRI) are disordered. A divalent metal cation contacts are provided by Asp295, Asp297, Asp307, His371, Glu406, and Glu421.

This sequence belongs to the peptidase M24B family. In terms of assembly, homodimer. It depends on a divalent metal cation as a cofactor.

It catalyses the reaction S,S-dimethyl-beta-propiothetin = acrylate + dimethyl sulfide + H(+). Able to cleave dimethylsulfoniopropionate (DMSP), releasing dimethyl sulfide (DMS). DMS is the principal form by which sulfur is transported from oceans to the atmosphere. The real activity of the protein is however subject to debate and it is unclear whether it constitutes a real dimethylsulfoniopropionate lyase in vivo: the low activity with DMSP as substrate suggests that DMSP is not its native substrate. The polypeptide is Dimethylsulfoniopropionate lyase DddP (Roseovarius nubinhibens (strain ATCC BAA-591 / DSM 15170 / ISM)).